The sequence spans 128 residues: MNVPENLMYTKNHEWIKVDGDTALVGVTDYAQKELGDIVFVELPEVSDEFAQSEGFAVLESVKAVSDVYLPVGGEVLEANEELLENPELVNQEPYASGWLVKIKLADKKELEDLMSSEEYARYLEEVE.

The 83-residue stretch at 22-104 (TALVGVTDYA…YASGWLVKIK (83 aa)) folds into the Lipoyl-binding domain. Lysine 63 is modified (N6-lipoyllysine).

It belongs to the GcvH family. The glycine cleavage system is composed of four proteins: P, T, L and H. (R)-lipoate serves as cofactor.

In terms of biological role, the glycine cleavage system catalyzes the degradation of glycine. The H protein shuttles the methylamine group of glycine from the P protein to the T protein. The polypeptide is Glycine cleavage system H protein (Halothermothrix orenii (strain H 168 / OCM 544 / DSM 9562)).